We begin with the raw amino-acid sequence, 357 residues long: Peptide chain release factor 1 (357 aa).

Gln234 is subject to N5-methylglutamine. Residues 282–313 (DSKKQEQRSNNRKQQVGSGDRSERIRTYNFPQ) form a disordered region.

The protein belongs to the prokaryotic/mitochondrial release factor family. In terms of processing, methylated by PrmC. Methylation increases the termination efficiency of RF1.

The protein resides in the cytoplasm. Peptide chain release factor 1 directs the termination of translation in response to the peptide chain termination codons UAG and UAA. The polypeptide is Peptide chain release factor 1 (Borreliella afzelii (strain PKo) (Borrelia afzelii)).